The chain runs to 302 residues: Protein FLOURY 1 (302 aa).

2 helical membrane-spanning segments follow: residues 27 to 47 (SAGA…VAVL) and 82 to 102 (LAGS…FLAV). The tract at residues 160–195 (SSKPVSRSLAAEFDQEADGEEEDNAGETSDPDDGSV) is disordered. Residues 172-192 (FDQEADGEEEDNAGETSDPDD) show a composition bias toward acidic residues. Residues 193-299 (GSVQYLRRRL…ALSETSEDDR (107 aa)) enclose the GTD-binding domain. Positions 199–254 (RRRLKEEMLLKEVALEELEKERHAAASAADEAMSKIACLRSEKALVEREARQFQEM) form a coiled coil. A disordered region spans residues 283–302 (PEAITDRALSETSEDDRDKK).

In terms of assembly, interacts (via C-terminus) with both 22 kDa and 19 kDa alpha-zeins. Interacts (via C-terminus) with OP10 (via N-terminus). As to expression, expressed in endosperm. Not detected in embryo, leaves and roots.

It is found in the endoplasmic reticulum membrane. Involved in protein body development and 22 kDa alpha-zein localization. This is Protein FLOURY 1 from Zea mays (Maize).